Consider the following 451-residue polypeptide: Prenyltransferase asqH1 (451 aa).

The interval 14–37 (AEDQSTRKVHWGQEGSGQSPEARP) is disordered. Position 120 (E120) interacts with L-tryptophan. Residues R137, R274, K276, Y278, and Y373 each contribute to the substrate site.

It belongs to the tryptophan dimethylallyltransferase family.

It carries out the reaction quinolinone B + dimethylallyl diphosphate = peniprequinolone + diphosphate. It participates in secondary metabolite biosynthesis. The protein operates within alkaloid biosynthesis. Its pathway is mycotoxin biosynthesis. Its function is as follows. Prenyltransferase; part of the gene cluster that mediates the biosynthesis of the aspoquinolone mycotoxins. Within the pathway, the prenyltransferase asqH1 catalyzes the canonical Friedel-Crafts alkylation of quinolinone B with dimethylallyl cation to yield dimethylallyl quinolone. The first step of the pathway is catalyzed by the nonribosomal peptide synthetase asqK that condenses anthranilic acid and O-methyl-L-tyrosine to produce 4'-methoxycyclopeptin. 4'-methoxycyclopeptin is then converted to 4'-methoxydehydrocyclopeptin by the ketoglutarate-dependent dioxygenase asqJ. AsqJ also converts its first product 4'-methoxydehydrocyclopeptin to 4'-methoxycyclopenin. The following conversion of 4'-methoxycyclopenin into 4'-methoxyviridicatin is catalyzed by the cyclopenase asqI. 4'-methoxyviridicatin is the precursor of quinolone natural products, and is further converted to quinolinone B. The prenyltransferase asqH1 then catalyzes the canonical Friedel-Crafts alkylation of quinolinone B with dimethylallyl cation to yield dimethylallyl quinolone, which is subjected to FAD-dependent dehydrogenation by the FAD-linked oxidoreductase asqF to yield conjugated aryl diene. The delta(3') double bond then serves as the site of the second alkylation with DMAPP catalyzed by the prenyltransferase asqH2 to yield a carbenium ion intermediate, which can be attacked by H(2)O to yield a styrenyl quinolone containing a C3'-hydroxyprenyl chain. The FAD-dependent monooxygenase asqG performs epoxidation of the terminal C7'-C8' olefin. Finally, after dehydratation of the epoxide at C3 by asqC, the quinolone epoxide rearrangement protein asqO catalyzes an enzymatic 3-exo-tet cyclization to yield the cyclopropyl-THF ring system in aspoquinolone. This is Prenyltransferase asqH1 from Emericella nidulans (strain FGSC A4 / ATCC 38163 / CBS 112.46 / NRRL 194 / M139) (Aspergillus nidulans).